A 160-amino-acid polypeptide reads, in one-letter code: Transcription elongation factor GreB (160 aa).

It belongs to the GreA/GreB family. GreB subfamily.

Necessary for efficient RNA polymerase transcription elongation past template-encoded arresting sites. The arresting sites in DNA have the property of trapping a certain fraction of elongating RNA polymerases that pass through, resulting in locked ternary complexes. Cleavage of the nascent transcript by cleavage factors such as GreA or GreB allows the resumption of elongation from the new 3'terminus. GreB releases sequences of up to 9 nucleotides in length. This chain is Transcription elongation factor GreB, found in Vibrio vulnificus (strain CMCP6).